We begin with the raw amino-acid sequence, 372 residues long: tRNA-specific 2-thiouridylase MnmA (372 aa).

ATP-binding positions include 16-23 (GMSGGVDS) and Met42. The interval 102–104 (NPD) is interaction with target base in tRNA. Cys107 acts as the Nucleophile in catalysis. Cys107 and Cys205 are joined by a disulfide. ATP is bound at residue Gly132. The segment at 155–157 (KDQ) is interaction with tRNA. The active-site Cysteine persulfide intermediate is Cys205. Residues 317-318 (RY) form an interaction with tRNA region.

This sequence belongs to the MnmA/TRMU family.

It localises to the cytoplasm. It catalyses the reaction S-sulfanyl-L-cysteinyl-[protein] + uridine(34) in tRNA + AH2 + ATP = 2-thiouridine(34) in tRNA + L-cysteinyl-[protein] + A + AMP + diphosphate + H(+). In terms of biological role, catalyzes the 2-thiolation of uridine at the wobble position (U34) of tRNA, leading to the formation of s(2)U34. This chain is tRNA-specific 2-thiouridylase MnmA, found in Shewanella putrefaciens (strain CN-32 / ATCC BAA-453).